Reading from the N-terminus, the 528-residue chain is Light-independent protochlorophyllide reductase subunit B (528 aa).

[4Fe-4S] cluster is bound at residue Asp36. Asp274 functions as the Proton donor in the catalytic mechanism. 409–410 (GL) provides a ligand contact to substrate. Residues 429–471 (GPSHHGGHAPKPMHDAPAASAAAGAEASMAEETAAPSQDAPAA) are disordered. Residues 444 to 465 (APAASAAAGAEASMAEETAAPS) show a composition bias toward low complexity.

This sequence belongs to the ChlB/BchB/BchZ family. As to quaternary structure, protochlorophyllide reductase is composed of three subunits; BchL, BchN and BchB. Forms a heterotetramer of two BchB and two BchN subunits. Requires [4Fe-4S] cluster as cofactor.

The catalysed reaction is chlorophyllide a + oxidized 2[4Fe-4S]-[ferredoxin] + 2 ADP + 2 phosphate = protochlorophyllide a + reduced 2[4Fe-4S]-[ferredoxin] + 2 ATP + 2 H2O. It participates in porphyrin-containing compound metabolism; bacteriochlorophyll biosynthesis (light-independent). Component of the dark-operative protochlorophyllide reductase (DPOR) that uses Mg-ATP and reduced ferredoxin to reduce ring D of protochlorophyllide (Pchlide) to form chlorophyllide a (Chlide). This reaction is light-independent. The NB-protein (BchN-BchB) is the catalytic component of the complex. In Dinoroseobacter shibae (strain DSM 16493 / NCIMB 14021 / DFL 12), this protein is Light-independent protochlorophyllide reductase subunit B.